Here is a 484-residue protein sequence, read N- to C-terminus: tRNA sulfurtransferase (484 aa).

In terms of domain architecture, THUMP spans 61–165 (PLILDLLKRT…GDKMLLVEAR (105 aa)). ATP contacts are provided by residues 183-184 (LI), lysine 265, glycine 287, and glutamine 296. Cysteines 344 and 456 form a disulfide. One can recognise a Rhodanese domain in the interval 404–483 (LTEKDIILDI…YQNVKVFNLP (80 aa)). Cysteine 456 acts as the Cysteine persulfide intermediate in catalysis.

The protein belongs to the ThiI family.

It is found in the cytoplasm. The enzyme catalyses [ThiI sulfur-carrier protein]-S-sulfanyl-L-cysteine + a uridine in tRNA + 2 reduced [2Fe-2S]-[ferredoxin] + ATP + H(+) = [ThiI sulfur-carrier protein]-L-cysteine + a 4-thiouridine in tRNA + 2 oxidized [2Fe-2S]-[ferredoxin] + AMP + diphosphate. It catalyses the reaction [ThiS sulfur-carrier protein]-C-terminal Gly-Gly-AMP + S-sulfanyl-L-cysteinyl-[cysteine desulfurase] + AH2 = [ThiS sulfur-carrier protein]-C-terminal-Gly-aminoethanethioate + L-cysteinyl-[cysteine desulfurase] + A + AMP + 2 H(+). It participates in cofactor biosynthesis; thiamine diphosphate biosynthesis. Functionally, catalyzes the ATP-dependent transfer of a sulfur to tRNA to produce 4-thiouridine in position 8 of tRNAs, which functions as a near-UV photosensor. Also catalyzes the transfer of sulfur to the sulfur carrier protein ThiS, forming ThiS-thiocarboxylate. This is a step in the synthesis of thiazole, in the thiamine biosynthesis pathway. The sulfur is donated as persulfide by IscS. In Haemophilus ducreyi (strain 35000HP / ATCC 700724), this protein is tRNA sulfurtransferase.